An 89-amino-acid polypeptide reads, in one-letter code: Small ribosomal subunit protein uS15 (89 aa).

Belongs to the universal ribosomal protein uS15 family. In terms of assembly, part of the 30S ribosomal subunit. Forms a bridge to the 50S subunit in the 70S ribosome, contacting the 23S rRNA.

Functionally, one of the primary rRNA binding proteins, it binds directly to 16S rRNA where it helps nucleate assembly of the platform of the 30S subunit by binding and bridging several RNA helices of the 16S rRNA. In terms of biological role, forms an intersubunit bridge (bridge B4) with the 23S rRNA of the 50S subunit in the ribosome. In Chromohalobacter salexigens (strain ATCC BAA-138 / DSM 3043 / CIP 106854 / NCIMB 13768 / 1H11), this protein is Small ribosomal subunit protein uS15.